Consider the following 321-residue polypeptide: Ribose-phosphate pyrophosphokinase (321 aa).

ATP is bound by residues 44 to 46 and 103 to 104; these read DGE and RQ. Mg(2+)-binding residues include H137 and D179. The active site involves K202. D-ribose 5-phosphate is bound by residues R204, D228, and 232–236; that span reads DTAGT.

It belongs to the ribose-phosphate pyrophosphokinase family. Class I subfamily. Homohexamer. The cofactor is Mg(2+).

It localises to the cytoplasm. It carries out the reaction D-ribose 5-phosphate + ATP = 5-phospho-alpha-D-ribose 1-diphosphate + AMP + H(+). The protein operates within metabolic intermediate biosynthesis; 5-phospho-alpha-D-ribose 1-diphosphate biosynthesis; 5-phospho-alpha-D-ribose 1-diphosphate from D-ribose 5-phosphate (route I): step 1/1. In terms of biological role, involved in the biosynthesis of the central metabolite phospho-alpha-D-ribosyl-1-pyrophosphate (PRPP) via the transfer of pyrophosphoryl group from ATP to 1-hydroxyl of ribose-5-phosphate (Rib-5-P). This is Ribose-phosphate pyrophosphokinase from Staphylococcus epidermidis (strain ATCC 35984 / DSM 28319 / BCRC 17069 / CCUG 31568 / BM 3577 / RP62A).